The sequence spans 691 residues: UvrABC system protein C (691 aa).

One can recognise a GIY-YIG domain in the interval 20-97; that stretch reads STSGVYLWKD…IKKHTPRYNI (78 aa). The UVR domain occupies 204–239; that stretch reads DATVARLEKRMKRAVRQEAFEAAARIRDDIQAIRCI. A disordered region spans residues 662 to 691; the sequence is RSTTAPVREEYKEHEHDPQGESPGPGRKTD. A compositionally biased stretch (basic and acidic residues) spans 668–680; that stretch reads VREEYKEHEHDPQ.

Belongs to the UvrC family. Interacts with UvrB in an incision complex.

It localises to the cytoplasm. The UvrABC repair system catalyzes the recognition and processing of DNA lesions. UvrC both incises the 5' and 3' sides of the lesion. The N-terminal half is responsible for the 3' incision and the C-terminal half is responsible for the 5' incision. This Treponema pallidum (strain Nichols) protein is UvrABC system protein C.